Reading from the N-terminus, the 266-residue chain is Putative carbamate hydrolase RutD (266 aa).

This sequence belongs to the AB hydrolase superfamily. Hydrolase RutD family.

It catalyses the reaction carbamate + 2 H(+) = NH4(+) + CO2. Involved in pyrimidine catabolism. May facilitate the hydrolysis of carbamate, a reaction that can also occur spontaneously. In Escherichia coli (strain B / BL21-DE3), this protein is Putative carbamate hydrolase RutD.